A 191-amino-acid chain; its full sequence is NADH-quinone oxidoreductase subunit B (191 aa).

Residues C52, C53, C118, and C148 each coordinate [4Fe-4S] cluster.

Belongs to the complex I 20 kDa subunit family. As to quaternary structure, NDH-1 is composed of 14 different subunits. Subunits NuoB, C, D, E, F, and G constitute the peripheral sector of the complex. The cofactor is [4Fe-4S] cluster.

The protein localises to the cell inner membrane. It carries out the reaction a quinone + NADH + 5 H(+)(in) = a quinol + NAD(+) + 4 H(+)(out). NDH-1 shuttles electrons from NADH, via FMN and iron-sulfur (Fe-S) centers, to quinones in the respiratory chain. The immediate electron acceptor for the enzyme in this species is believed to be a menaquinone. Couples the redox reaction to proton translocation (for every two electrons transferred, four hydrogen ions are translocated across the cytoplasmic membrane), and thus conserves the redox energy in a proton gradient. This chain is NADH-quinone oxidoreductase subunit B, found in Azobacteroides pseudotrichonymphae genomovar. CFP2.